Here is a 60-residue protein sequence, read N- to C-terminus: Large ribosomal subunit protein bL32 (60 aa).

This sequence belongs to the bacterial ribosomal protein bL32 family.

This is Large ribosomal subunit protein bL32 from Ehrlichia ruminantium (strain Gardel).